The following is a 282-amino-acid chain: NAD-dependent protein deacetylase 1 (282 aa).

The region spanning 1–282 is the Deacetylase sirtuin-type domain; it reads MTVGRAESPE…ADELSPLPTH (282 aa). Residues 25–45 and 101–104 each bind NAD(+); these read GAGI…SPPS and QNVD. Catalysis depends on H119, which acts as the Proton acceptor. Residues C127, C130, C181, and C184 each coordinate Zn(2+). Residues 221 to 223, 247 to 249, and C265 contribute to the NAD(+) site; these read GSS and NRG.

Belongs to the sirtuin family. Class II subfamily. Requires Zn(2+) as cofactor.

It is found in the cytoplasm. It carries out the reaction N(6)-acetyl-L-lysyl-[protein] + NAD(+) + H2O = 2''-O-acetyl-ADP-D-ribose + nicotinamide + L-lysyl-[protein]. Its function is as follows. NAD-dependent protein deacetylase which modulates the activities of several enzymes which are inactive in their acetylated form. This chain is NAD-dependent protein deacetylase 1, found in Mycobacterium avium (strain 104).